Consider the following 724-residue polypeptide: 1,3-beta-galactosyl-N-acetylhexosamine phosphorylase Cphy3030 (724 aa).

Asp-316 acts as the Proton donor in catalysis.

The protein belongs to the glycoside hydrolase 112 family.

The catalysed reaction is beta-D-galactosyl-(1-&gt;3)-N-acetyl-D-glucosamine + phosphate = alpha-D-galactose 1-phosphate + N-acetyl-D-glucosamine. Functionally, reversibly phosphorolyzes beta-D-galactopyranosyl-(1-&gt;3)-N-acetyl-D-glucosamine to form alpha-D-galactopyranose 1-phosphate and acetyl-D-glucosamine. Active towards galacto-N-biose and lacto-N-biose. Does not phosphorolyze galacto-N-tetraose or lacto-N-tetraose. In the reverse reaction has activity toward N-acetyl-D-glucosamine and N-acetyl-D-galactosamine, but not L-rhamnose, D-glucose or D-galactose. This is 1,3-beta-galactosyl-N-acetylhexosamine phosphorylase Cphy3030 from Lachnoclostridium phytofermentans (strain ATCC 700394 / DSM 18823 / ISDg) (Clostridium phytofermentans).